The primary structure comprises 105 residues: Cuticle protein AMP2 (105 aa).

The disordered stretch occupies residues 1–21 (DRDAQTLTDERSDQGDGNFRY). The Chitin-binding type R&amp;R domain maps to 16 to 81 (DGNFRYEFET…PSSDLLPVGP (66 aa)).

Arthrodial membrane.

The chain is Cuticle protein AMP2 from Homarus americanus (American lobster).